The primary structure comprises 395 residues: ETS-related transcription factor Elf-3 (395 aa).

Residues 69–155 (EPPAVLHLAE…AQLRDLTSSS (87 aa)) enclose the PNT domain. Over residues 200-240 (ASPYYGSSYGPGAPSPGSSDFSTSGTDTPQSSHSSDSGGSD) the composition is skewed to low complexity. A disordered region spans residues 200–275 (ASPYYGSSYG…HGKRKRGRPR (76 aa)). Residues 246 to 265 (TDSKVFPRDGFPDYKKGEPK) show a composition bias toward basic and acidic residues. The segment covering 266-275 (HGKRKRGRPR) has biased composition (basic residues). Positions 297–379 (THLWEFIRDI…DGRRLVYKFG (83 aa)) form a DNA-binding region, ETS.

The protein belongs to the ETS family. As to quaternary structure, interacts with TBP. Interacts with CREBBP and EP300; these act as transcriptional coactivators of ELF3 and positively modulate its function. Interacts with XRCC5/KU86 and XRCC6/KU70; these inhibit the ability of ELF3 to bind DNA and negatively modulate its transcriptional activity. Associated with CLND7 and POU2F3. Interacts with ZNF768.

Its subcellular location is the cytoplasm. It is found in the nucleus. Transcriptional activator that binds and transactivates ETS sequences containing the consensus nucleotide core sequence GGA[AT]. Acts synergistically with POU2F3 to transactivate the SPRR2A promoter and with RUNX1 to transactivate the ANGPT1 promoter. Also transactivates collagenase, CCL20, CLND7, FLG, KRT8, NOS2, PTGS2, SPRR2B, TGFBR2 and TGM3 promoters. Represses KRT4 promoter activity. Involved in mediating vascular inflammation. May play an important role in epithelial cell differentiation and tumorigenesis. May be a critical downstream effector of the ERBB2 signaling pathway. May be associated with mammary gland development and involution. Plays an important role in the regulation of transcription with TATA-less promoters in preimplantation embryos, which is essential in preimplantation development. This chain is ETS-related transcription factor Elf-3, found in Rattus norvegicus (Rat).